An 864-amino-acid chain; its full sequence is Mitochondrial 15S rRNA processing factor CCM1 (864 aa).

Residues 1 to 76 (MYMARCGPKN…REFSNTLKER (76 aa)) constitute a mitochondrion transit peptide. PPR repeat units follow at residues 319–353 (NKQN…STKH) and 356–390 (DICT…NIKP).

Belongs to the CCM1 family. Binds to mitochondrial small subunit 15S rRNA.

Its subcellular location is the mitochondrion. Its function is as follows. Regulates mitochondrial small subunit maturation by controlling 15S rRNA 5'-end processing. Localizes to the 5' precursor of the 15S rRNA in a position that is subsequently occupied by mS47 in the mature yeast mtSSU. Uses structure and sequence-specific RNA recognition, binding to a single-stranded region of the precursor and specifically recognizing bases -6 to -1. The exchange of Ccm1 for mS47 is coupled to the irreversible removal of precursor rRNA that is accompanied by conformational changes of the mitoribosomal proteins uS5m and mS26. These conformational changes signal completion of 5'-end rRNA processing through protection of the mature 5'-end of the 15S rRNA and stabilization of mS47. The removal of the 5' precursor together with the dissociation of Ccm1 may be catalyzed by the 5'-3' exoribonuclease Pet127. Involved in the specific removal of group I introns in mitochondrial encoded transcripts. The chain is Mitochondrial 15S rRNA processing factor CCM1 (CCM1) from Saccharomyces cerevisiae (strain RM11-1a) (Baker's yeast).